The chain runs to 821 residues: Phenylalanine--tRNA ligase beta subunit (821 aa).

Positions 39–149 (SENVKGIVLG…EDIALNHNLG (111 aa)) constitute a tRNA-binding domain. A B5 domain is found at 414 to 507 (LKKILIPLRR…RLIGYDMFDL (94 aa)). Mg(2+) contacts are provided by D485, D491, E494, and E495. The 94-residue stretch at 727 to 820 (PTVPKMERDI…IEKKFSTKLR (94 aa)) folds into the FDX-ACB domain.

Belongs to the phenylalanyl-tRNA synthetase beta subunit family. Type 1 subfamily. Tetramer of two alpha and two beta subunits. It depends on Mg(2+) as a cofactor.

The protein localises to the cytoplasm. It catalyses the reaction tRNA(Phe) + L-phenylalanine + ATP = L-phenylalanyl-tRNA(Phe) + AMP + diphosphate + H(+). This Prochlorococcus marinus subsp. pastoris (strain CCMP1986 / NIES-2087 / MED4) protein is Phenylalanine--tRNA ligase beta subunit.